We begin with the raw amino-acid sequence, 228 residues long: 7-cyano-7-deazaguanine synthase (228 aa).

Residue 13 to 23 (LSGGMDSTLSS) participates in ATP binding. Cysteine 192, cysteine 200, cysteine 203, and cysteine 206 together coordinate Zn(2+).

It belongs to the QueC family. Zn(2+) is required as a cofactor.

It carries out the reaction 7-carboxy-7-deazaguanine + NH4(+) + ATP = 7-cyano-7-deazaguanine + ADP + phosphate + H2O + H(+). The protein operates within purine metabolism; 7-cyano-7-deazaguanine biosynthesis. Its function is as follows. Catalyzes the ATP-dependent conversion of 7-carboxy-7-deazaguanine (CDG) to 7-cyano-7-deazaguanine (preQ(0)). This Aliarcobacter butzleri (strain RM4018) (Arcobacter butzleri) protein is 7-cyano-7-deazaguanine synthase.